The primary structure comprises 373 residues: D-alanine--D-alanine ligase (373 aa).

The ATP-grasp domain occupies 165 to 369; that stretch reads KRLAREAGIP…FGDLVSALIA (205 aa). 192–247 lines the ATP pocket; the sequence is KERLGLPVFVKPARGGSSIGISKVDSWEEFDAAIDLAFSNDNKVIVEAMIHGAEVE. Mg(2+) is bound by residues aspartate 324, glutamate 336, and asparagine 338.

It belongs to the D-alanine--D-alanine ligase family. Mg(2+) is required as a cofactor. Mn(2+) serves as cofactor.

Its subcellular location is the cytoplasm. The catalysed reaction is 2 D-alanine + ATP = D-alanyl-D-alanine + ADP + phosphate + H(+). Its pathway is cell wall biogenesis; peptidoglycan biosynthesis. In terms of biological role, cell wall formation. The sequence is that of D-alanine--D-alanine ligase from Corynebacterium jeikeium (strain K411).